The following is a 78-amino-acid chain: MKLIIFTGLALLLIVSLIDVEAQNEGACLPRGSVCTTNHASCCSKLSCDCYRRFEKGVEKGQKCWCIPTGLRYSKEKE.

An N-terminal signal peptide occupies residues M1–A22. Residues Q23–G26 constitute a propeptide that is removed on maturation.

Belongs to the neurotoxin 19 (CSTX) family. 07 (U7-Lctx) subfamily. Post-translationally, contains 4 disulfide bonds. As to expression, expressed by the venom gland.

Its subcellular location is the secreted. This is U7-lycotoxin-Ls1e from Lycosa singoriensis (Wolf spider).